Consider the following 70-residue polypeptide: Small ribosomal subunit protein bS21 (70 aa).

It belongs to the bacterial ribosomal protein bS21 family.

In Campylobacter hominis (strain ATCC BAA-381 / DSM 21671 / CCUG 45161 / LMG 19568 / NCTC 13146 / CH001A), this protein is Small ribosomal subunit protein bS21.